The chain runs to 94 residues: Scorpine (94 aa).

A signal peptide spans 1-19; sequence MNSKLTALIFLGLIAIAYC. Positions 55–94 constitute a BetaSPN-type CS-alpha/beta domain; the sequence is EFQCMANMDMLGNCEKHCQTSGEKGYCHGTKCKCGTPLSY. Disulfide bonds link C58-C81, C68-C86, and C72-C88.

Belongs to the long chain scorpion toxin family. Class 3 subfamily. Expressed by the venom gland.

It localises to the secreted. It is found in the target cell membrane. This full-length protein shows antibacterial activity against B.subtilis and K.pneumoniae. Also shows a potent inhibitory effect on the ookinete (ED(50) 0.7 uM) and gamete (ED(50) 10 uM) stages of Plasmodium berghei development. In addition, induces cell membrane disruption, leakage currents and cell death on HEK293 cell line (tested at 25 uM). This Pandinus imperator (Emperor scorpion) protein is Scorpine.